Consider the following 269-residue polypeptide: Propanediol uptake facilitator PduF (269 aa).

Helical transmembrane passes span 10–30 (IAEF…LSAL) and 42–62 (ICII…GISG). Residues 66–68 (NPA) carry the NPA 1 motif. 3 helical membrane passes run 69-89 (ITIA…PYTV), 143-163 (VWQA…MIMA), and 179-199 (LLIG…TGFA). An NPA 2 motif is present at residues 201–203 (NPA). The helical transmembrane segment at 228–248 (IPYFIVPIVAPIIGACAGAAI) threads the bilayer.

The protein belongs to the MIP/aquaporin (TC 1.A.8) family.

Its subcellular location is the cell inner membrane. In terms of biological role, probably facilitates diffusion of 1,2-propanediol (1,2-PD) into the cell. In Citrobacter freundii, this protein is Propanediol uptake facilitator PduF.